Reading from the N-terminus, the 229-residue chain is Peptidase E (229 aa).

Active-site charge relay system residues include Ser120, Asp135, and His157.

The protein belongs to the peptidase S51 family.

The protein resides in the cytoplasm. It catalyses the reaction Dipeptidase E catalyzes the hydrolysis of dipeptides Asp-|-Xaa. It does not act on peptides with N-terminal Glu, Asn or Gln, nor does it cleave isoaspartyl peptides.. Hydrolyzes dipeptides containing N-terminal aspartate residues. May play a role in allowing the cell to use peptide aspartate to spare carbon otherwise required for the synthesis of the aspartate family of amino acids. The polypeptide is Peptidase E (Salmonella typhi).